Consider the following 462-residue polypeptide: ATP synthase subunit beta (462 aa).

Residue 152-159 participates in ATP binding; that stretch reads GGAGVGKT.

The protein belongs to the ATPase alpha/beta chains family. F-type ATPases have 2 components, CF(1) - the catalytic core - and CF(0) - the membrane proton channel. CF(1) has five subunits: alpha(3), beta(3), gamma(1), delta(1), epsilon(1). CF(0) has three main subunits: a(1), b(2) and c(9-12). The alpha and beta chains form an alternating ring which encloses part of the gamma chain. CF(1) is attached to CF(0) by a central stalk formed by the gamma and epsilon chains, while a peripheral stalk is formed by the delta and b chains.

The protein resides in the cell inner membrane. It catalyses the reaction ATP + H2O + 4 H(+)(in) = ADP + phosphate + 5 H(+)(out). In terms of biological role, produces ATP from ADP in the presence of a proton gradient across the membrane. The catalytic sites are hosted primarily by the beta subunits. This is ATP synthase subunit beta from Blochmanniella pennsylvanica (strain BPEN).